An 82-amino-acid polypeptide reads, in one-letter code: Small ribosomal subunit protein bS16 (82 aa).

It belongs to the bacterial ribosomal protein bS16 family.

The chain is Small ribosomal subunit protein bS16 from Francisella philomiragia subsp. philomiragia (strain ATCC 25017 / CCUG 19701 / FSC 153 / O#319-036).